An 86-amino-acid polypeptide reads, in one-letter code: uncharacterized protein (86 aa).

Residues 4-24 (LFFTLIAFVAIILLMSIGFII) form a helical membrane-spanning segment.

The protein localises to the membrane. This is an uncharacterized protein from Haemophilus influenzae (strain ATCC 51907 / DSM 11121 / KW20 / Rd).